The sequence spans 696 residues: Glycine--tRNA ligase beta subunit (696 aa).

It belongs to the class-II aminoacyl-tRNA synthetase family. In terms of assembly, tetramer of two alpha and two beta subunits.

The protein resides in the cytoplasm. The catalysed reaction is tRNA(Gly) + glycine + ATP = glycyl-tRNA(Gly) + AMP + diphosphate. This Oleidesulfovibrio alaskensis (strain ATCC BAA-1058 / DSM 17464 / G20) (Desulfovibrio alaskensis) protein is Glycine--tRNA ligase beta subunit.